We begin with the raw amino-acid sequence, 127 residues long: uncharacterized protein (127 aa).

A helical transmembrane segment spans residues 5 to 25 (ILGITIAFIILLLTTVAILFS).

It is found in the membrane. This is an uncharacterized protein from Mycoplasma genitalium (strain ATCC 33530 / DSM 19775 / NCTC 10195 / G37) (Mycoplasmoides genitalium).